We begin with the raw amino-acid sequence, 305 residues long: Ornithine carbamoyltransferase (305 aa).

Residues 48–51 (STRT), Arg-99, and 126–129 (HPCQ) each bind carbamoyl phosphate. L-ornithine is bound by residues Asn-157, Asp-222, and 226-227 (SM). Carbamoyl phosphate-binding positions include 262–263 (CL) and Arg-290.

Belongs to the aspartate/ornithine carbamoyltransferase superfamily. OTCase family.

It is found in the cytoplasm. It carries out the reaction carbamoyl phosphate + L-ornithine = L-citrulline + phosphate + H(+). The protein operates within amino-acid biosynthesis; L-arginine biosynthesis; L-arginine from L-ornithine and carbamoyl phosphate: step 1/3. Functionally, reversibly catalyzes the transfer of the carbamoyl group from carbamoyl phosphate (CP) to the N(epsilon) atom of ornithine (ORN) to produce L-citrulline. This Methanocaldococcus jannaschii (strain ATCC 43067 / DSM 2661 / JAL-1 / JCM 10045 / NBRC 100440) (Methanococcus jannaschii) protein is Ornithine carbamoyltransferase (argF).